The following is a 199-amino-acid chain: ATP-dependent Clp protease proteolytic subunit (199 aa).

Catalysis depends on Ser99, which acts as the Nucleophile. The active site involves His124.

Belongs to the peptidase S14 family. In terms of assembly, fourteen ClpP subunits assemble into 2 heptameric rings which stack back to back to give a disk-like structure with a central cavity, resembling the structure of eukaryotic proteasomes.

The protein resides in the cytoplasm. It catalyses the reaction Hydrolysis of proteins to small peptides in the presence of ATP and magnesium. alpha-casein is the usual test substrate. In the absence of ATP, only oligopeptides shorter than five residues are hydrolyzed (such as succinyl-Leu-Tyr-|-NHMec, and Leu-Tyr-Leu-|-Tyr-Trp, in which cleavage of the -Tyr-|-Leu- and -Tyr-|-Trp bonds also occurs).. In terms of biological role, cleaves peptides in various proteins in a process that requires ATP hydrolysis. Has a chymotrypsin-like activity. Plays a major role in the degradation of misfolded proteins. This is ATP-dependent Clp protease proteolytic subunit from Lactococcus lactis subsp. lactis (strain IL1403) (Streptococcus lactis).